A 105-amino-acid chain; its full sequence is Heat shock protein HspQ (105 aa).

The disordered stretch occupies residues 75–105; it reads GEMQEEHPEQPSMDELARSIRQQLQAPRLRN.

Belongs to the HspQ family.

It is found in the cytoplasm. Functionally, involved in the degradation of certain denaturated proteins, including DnaA, during heat shock stress. This chain is Heat shock protein HspQ, found in Cronobacter sakazakii (strain ATCC BAA-894) (Enterobacter sakazakii).